The chain runs to 191 residues: Molybdenum cofactor guanylyltransferase (191 aa).

Residues 13–15 (LAG), K26, D72, and D102 contribute to the GTP site. Residue D102 coordinates Mg(2+).

It belongs to the MobA family. As to quaternary structure, monomer. It depends on Mg(2+) as a cofactor.

It localises to the cytoplasm. It carries out the reaction Mo-molybdopterin + GTP + H(+) = Mo-molybdopterin guanine dinucleotide + diphosphate. Functionally, transfers a GMP moiety from GTP to Mo-molybdopterin (Mo-MPT) cofactor (Moco or molybdenum cofactor) to form Mo-molybdopterin guanine dinucleotide (Mo-MGD) cofactor. The polypeptide is Molybdenum cofactor guanylyltransferase (Pseudomonas entomophila (strain L48)).